The following is a 186-amino-acid chain: ATP synthase subunit delta (186 aa).

This sequence belongs to the ATPase delta chain family. As to quaternary structure, F-type ATPases have 2 components, F(1) - the catalytic core - and F(0) - the membrane proton channel. F(1) has five subunits: alpha(3), beta(3), gamma(1), delta(1), epsilon(1). F(0) has three main subunits: a(1), b(2) and c(10-14). The alpha and beta chains form an alternating ring which encloses part of the gamma chain. F(1) is attached to F(0) by a central stalk formed by the gamma and epsilon chains, while a peripheral stalk is formed by the delta and b chains.

Its subcellular location is the cell inner membrane. F(1)F(0) ATP synthase produces ATP from ADP in the presence of a proton or sodium gradient. F-type ATPases consist of two structural domains, F(1) containing the extramembraneous catalytic core and F(0) containing the membrane proton channel, linked together by a central stalk and a peripheral stalk. During catalysis, ATP synthesis in the catalytic domain of F(1) is coupled via a rotary mechanism of the central stalk subunits to proton translocation. Its function is as follows. This protein is part of the stalk that links CF(0) to CF(1). It either transmits conformational changes from CF(0) to CF(1) or is implicated in proton conduction. The polypeptide is ATP synthase subunit delta (Leptospira borgpetersenii serovar Hardjo-bovis (strain JB197)).